Here is a 507-residue protein sequence, read N- to C-terminus: Nuclear distribution protein PAC1 (507 aa).

A coiled-coil region spans residues 72–98 (STVLRLQRKIMDLTDEVSNLKTIIEAK). WD repeat units follow at residues 125–164 (QTHQSVNTVAVHPYLPLIMAGCSDGTLSVWNIANDDPSIP), 170–222 (AHSR…QIRI), 225–265 (GHDH…CTRT), 268–312 (GHSD…GLCL), 315–389 (GHSH…VRPN), 410–449 (GHQSWVKTLQVHPNGRFIFSAGDDKSIRVWDLSTLATGGR), and 474–507 (PKDTTNEDILQDIESRMRCVFVSGGTDNTVRLWS).

Belongs to the WD repeat LIS1/nudF family. In terms of assembly, self-associates. Interacts with NDL1 and dynein.

The protein localises to the cytoplasm. Its subcellular location is the cytoskeleton. It is found in the spindle pole. Its function is as follows. Positively regulates the activity of the minus-end directed microtubule motor protein dynein. Plays a central role in positioning the mitotic spindle at the bud neck during cell division. Targets cytoplasmic dynein to microtubule plus ends, thereby promoting dynein-mediated microtubule sliding along the bud cortex and consequently the movement of the mitotic spindle to the bud neck. The protein is Nuclear distribution protein PAC1 of Meyerozyma guilliermondii (strain ATCC 6260 / CBS 566 / DSM 6381 / JCM 1539 / NBRC 10279 / NRRL Y-324) (Yeast).